The primary structure comprises 380 residues: Histidinol-phosphate aminotransferase 1 (380 aa).

An N6-(pyridoxal phosphate)lysine modification is found at K235.

It belongs to the class-II pyridoxal-phosphate-dependent aminotransferase family. Histidinol-phosphate aminotransferase subfamily. In terms of assembly, homodimer. It depends on pyridoxal 5'-phosphate as a cofactor.

The enzyme catalyses L-histidinol phosphate + 2-oxoglutarate = 3-(imidazol-4-yl)-2-oxopropyl phosphate + L-glutamate. Its pathway is amino-acid biosynthesis; L-histidine biosynthesis; L-histidine from 5-phospho-alpha-D-ribose 1-diphosphate: step 7/9. This chain is Histidinol-phosphate aminotransferase 1, found in Psychrobacter arcticus (strain DSM 17307 / VKM B-2377 / 273-4).